The following is a 363-amino-acid chain: Probable endopolygalacturonase B (363 aa).

An N-terminal signal peptide occupies residues 1–20 (MQLLQSSVIAATVGAALVAA). The propeptide occupies 21–28 (VPVELEAR). Residues Cys31 and Cys46 are joined by a disulfide bond. PbH1 repeat units lie at residues 158-187 (SDNL…DVGS), 188-209 (STYI…AINS), 210-230 (GSHI…SIGS), 239-260 (VEDV…RIKT), 268-290 (VSNV…IVEQ), and 302-347 (TNGI…SITG). N-linked (GlcNAc...) asparagine glycosylation is present at Asn162. Catalysis depends on Asp202, which acts as the Proton donor. Cys204 and Cys220 are joined by a disulfide. Residue His224 is part of the active site. Intrachain disulfides connect Cys330–Cys335 and Cys354–Cys363.

Belongs to the glycosyl hydrolase 28 family.

The protein resides in the secreted. It catalyses the reaction (1,4-alpha-D-galacturonosyl)n+m + H2O = (1,4-alpha-D-galacturonosyl)n + (1,4-alpha-D-galacturonosyl)m.. Its function is as follows. Involved in maceration and soft-rotting of plant tissue. Hydrolyzes the 1,4-alpha glycosidic bonds of de-esterified pectate in the smooth region of the plant cell wall. The sequence is that of Probable endopolygalacturonase B (pgaB) from Aspergillus flavus (strain ATCC 200026 / FGSC A1120 / IAM 13836 / NRRL 3357 / JCM 12722 / SRRC 167).